Consider the following 476-residue polypeptide: Glycogen synthase (476 aa).

Position 15 (Lys-15) interacts with ADP-alpha-D-glucose.

This sequence belongs to the glycosyltransferase 1 family. Bacterial/plant glycogen synthase subfamily.

It carries out the reaction [(1-&gt;4)-alpha-D-glucosyl](n) + ADP-alpha-D-glucose = [(1-&gt;4)-alpha-D-glucosyl](n+1) + ADP + H(+). Its pathway is glycan biosynthesis; glycogen biosynthesis. Its function is as follows. Synthesizes alpha-1,4-glucan chains using ADP-glucose. This chain is Glycogen synthase, found in Streptococcus agalactiae serotype III (strain NEM316).